The primary structure comprises 375 residues: Growth/differentiation factor 8 (375 aa).

The N-terminal stretch at 1 to 18 (MQRLQICVYIYLFVLIVA) is a signal peptide. Residues 19–266 (GPVDLSENSE…VTDTPKRSRR (248 aa)) constitute a propeptide that is removed on maturation. N-linked (GlcNAc...) asparagine glycosylation occurs at Asn71. 4 disulfides stabilise this stretch: Cys272-Cys282, Cys281-Cys340, Cys309-Cys372, and Cys313-Cys374.

The protein belongs to the TGF-beta family. As to quaternary structure, homodimer; disulfide-linked. Interacts with WFIKKN2, leading to inhibit its activity. Interacts with FSTL3. Synthesized as large precursor molecule that undergoes proteolytic cleavage to generate an N-terminal propeptide and a disulfide linked C-terminal dimer, which is the biologically active molecule. The circulating form consists of a latent complex of the C-terminal dimer and other proteins, including its propeptide, which maintain the C-terminal dimer in a latent, inactive state. Ligand activation requires additional cleavage of the prodomain by a tolloid-like metalloproteinase.

The protein resides in the secreted. Its function is as follows. Acts specifically as a negative regulator of skeletal muscle growth. This chain is Growth/differentiation factor 8 (MSTN), found in Canis lupus familiaris (Dog).